The sequence spans 285 residues: Bifunctional protein FolD (285 aa).

NADP(+) contacts are provided by residues Gly-166–Ser-168 and Ile-232.

The protein belongs to the tetrahydrofolate dehydrogenase/cyclohydrolase family. Homodimer.

It carries out the reaction (6R)-5,10-methylene-5,6,7,8-tetrahydrofolate + NADP(+) = (6R)-5,10-methenyltetrahydrofolate + NADPH. The enzyme catalyses (6R)-5,10-methenyltetrahydrofolate + H2O = (6R)-10-formyltetrahydrofolate + H(+). It functions in the pathway one-carbon metabolism; tetrahydrofolate interconversion. In terms of biological role, catalyzes the oxidation of 5,10-methylenetetrahydrofolate to 5,10-methenyltetrahydrofolate and then the hydrolysis of 5,10-methenyltetrahydrofolate to 10-formyltetrahydrofolate. In Vibrio vulnificus (strain CMCP6), this protein is Bifunctional protein FolD.